The sequence spans 506 residues: Histidine--tRNA ligase, mitochondrial (506 aa).

Residues 1–33 (MPQLGLLPGRAWTVLLGLLRPPPGALCIRAVRS) constitute a mitochondrion transit peptide. S67 carries the post-translational modification Phosphoserine. L-histidine is bound by residues 131–133 (DLT), R158, Q174, D178, R327, and 331–332 (YY). K444 bears the N6-acetyllysine mark.

Belongs to the class-II aminoacyl-tRNA synthetase family. In terms of assembly, homodimer.

It localises to the mitochondrion. The enzyme catalyses tRNA(His) + L-histidine + ATP = L-histidyl-tRNA(His) + AMP + diphosphate + H(+). Its function is as follows. Mitochondrial aminoacyl-tRNA synthetase that catalyzes the ATP-dependent ligation of histidine to the 3'-end of its cognate tRNA, via the formation of an aminoacyl-adenylate intermediate (His-AMP). In Bos taurus (Bovine), this protein is Histidine--tRNA ligase, mitochondrial (HARS2).